A 123-amino-acid polypeptide reads, in one-letter code: Integration host factor subunit alpha (123 aa).

The protein belongs to the bacterial histone-like protein family. In terms of assembly, heterodimer of an alpha and a beta chain.

Its function is as follows. This protein is one of the two subunits of integration host factor, a specific DNA-binding protein that functions in genetic recombination as well as in transcriptional and translational control. In Polaromonas naphthalenivorans (strain CJ2), this protein is Integration host factor subunit alpha.